Here is a 392-residue protein sequence, read N- to C-terminus: Heat-inducible transcription repressor HrcA (392 aa).

Belongs to the HrcA family.

Its function is as follows. Negative regulator of class I heat shock genes (grpE-dnaK-dnaJ and groELS operons). Prevents heat-shock induction of these operons. The protein is Heat-inducible transcription repressor HrcA of Synechococcus sp. (strain JA-3-3Ab) (Cyanobacteria bacterium Yellowstone A-Prime).